Consider the following 1457-residue polypeptide: Receptor-type tyrosine-protein phosphatase kappa (1457 aa).

Positions 1-25 (MDVAAAALPAFVALWLLYPWPLLGS) are cleaved as a signal peptide. Topologically, residues 26–752 (ALGQFSAGGC…PAKQTDRVVK (727 aa)) are extracellular. Residues 30–193 (FSAGGCTFDD…IQVLSYPCDK (164 aa)) enclose the MAM domain. N-linked (GlcNAc...) asparagine glycans are attached at residues Asn100, Asn139, and Asn210. The region spanning 195-280 (PHFLRLGDVE…TQSERGSGVS (86 aa)) is the Ig-like C2-type domain. Cys215 and Cys269 form a disulfide bridge. Fibronectin type-III domains lie at 293–388 (PIAP…CAEP), 391–487 (TPKT…TDED), 490–594 (GPVP…SAPS), and 595–688 (LPDY…TVGD). Residues Asn415, Asn423, Asn435, Asn461, Asn551, Asn585, Asn589, Asn606, and Asn689 are each glycosylated (N-linked (GlcNAc...) asparagine). The chain crosses the membrane as a helical span at residues 753–774 (IAGISAGILVFILLLLVVIVIV). Residues 775-1457 (KKSKLAKKRK…DVALEYLESS (683 aa)) are Cytoplasmic-facing. Ser868 is modified (phosphoserine). Tyrosine-protein phosphatase domains follow at residues 899-1159 (FKEE…ILEA) and 1191-1453 (LKDE…ALEY). Residues Asp1068, 1100-1106 (CSAGAGR), and Gln1144 contribute to the substrate site. Cys1100 acts as the Phosphocysteine intermediate in catalysis. The active-site Phosphocysteine intermediate is the Cys1394.

This sequence belongs to the protein-tyrosine phosphatase family. Receptor class 2B subfamily. Post-translationally, this protein undergoes proteolytic processing. As to expression, high levels in liver and kidney. Lower levels in lung, brain and heart. Not seen in spleen and testis.

It is found in the membrane. It carries out the reaction O-phospho-L-tyrosyl-[protein] + H2O = L-tyrosyl-[protein] + phosphate. In terms of biological role, regulation of processes involving cell contact and adhesion such as growth control, tumor invasion, and metastasis. Negative regulator of EGFR signaling pathway. Forms complexes with beta-catenin and gamma-catenin/plakoglobin. Beta-catenin may be a substrate for the catalytic activity of PTPRK/PTP-kappa. This is Receptor-type tyrosine-protein phosphatase kappa (Ptprk) from Mus musculus (Mouse).